Reading from the N-terminus, the 279-residue chain is NADPH-dependent 7-cyano-7-deazaguanine reductase (279 aa).

A substrate-binding site is contributed by 86–88; sequence IES. 88–89 serves as a coordination point for NADPH; that stretch reads SK. The active-site Thioimide intermediate is Cys-187. Asp-194 serves as the catalytic Proton donor. Residue 226-227 participates in substrate binding; it reads HE. Residue 255 to 256 participates in NADPH binding; the sequence is RG.

Belongs to the GTP cyclohydrolase I family. QueF type 2 subfamily. Homodimer.

It localises to the cytoplasm. The enzyme catalyses 7-aminomethyl-7-carbaguanine + 2 NADP(+) = 7-cyano-7-deazaguanine + 2 NADPH + 3 H(+). It functions in the pathway tRNA modification; tRNA-queuosine biosynthesis. Functionally, catalyzes the NADPH-dependent reduction of 7-cyano-7-deazaguanine (preQ0) to 7-aminomethyl-7-deazaguanine (preQ1). In Actinobacillus pleuropneumoniae serotype 7 (strain AP76), this protein is NADPH-dependent 7-cyano-7-deazaguanine reductase.